The following is a 701-amino-acid chain: Polyribonucleotide nucleotidyltransferase (701 aa).

Asp-487 and Asp-493 together coordinate Mg(2+). The KH domain maps to 553–612; sequence PRLYTLRINPDKIRDVIGKGGSVIRALTEETGTSIDIAEDGLITIASVSAEGAEEAKRRI. Residues 622–692 enclose the S1 motif domain; sequence GKIYEGTVVK…ERGRIRLSIK (71 aa).

The protein belongs to the polyribonucleotide nucleotidyltransferase family. Mg(2+) is required as a cofactor.

It localises to the cytoplasm. The catalysed reaction is RNA(n+1) + phosphate = RNA(n) + a ribonucleoside 5'-diphosphate. In terms of biological role, involved in mRNA degradation. Catalyzes the phosphorolysis of single-stranded polyribonucleotides processively in the 3'- to 5'-direction. The protein is Polyribonucleotide nucleotidyltransferase of Laribacter hongkongensis (strain HLHK9).